A 589-amino-acid chain; its full sequence is Aspartate--tRNA ligase (589 aa).

Residue glutamate 174 coordinates L-aspartate. The interval 198 to 201 is aspartate; sequence QLFK. L-aspartate is bound at residue arginine 220. ATP-binding positions include 220-222 and glutamine 229; that span reads RDE. Histidine 448 contributes to the L-aspartate binding site. Glutamate 483 contacts ATP. Arginine 490 contributes to the L-aspartate binding site. 535 to 538 provides a ligand contact to ATP; the sequence is GIDR.

The protein belongs to the class-II aminoacyl-tRNA synthetase family. Type 1 subfamily. As to quaternary structure, homodimer.

The protein localises to the cytoplasm. It catalyses the reaction tRNA(Asp) + L-aspartate + ATP = L-aspartyl-tRNA(Asp) + AMP + diphosphate. Functionally, catalyzes the attachment of L-aspartate to tRNA(Asp) in a two-step reaction: L-aspartate is first activated by ATP to form Asp-AMP and then transferred to the acceptor end of tRNA(Asp). This Xylella fastidiosa (strain M23) protein is Aspartate--tRNA ligase.